The following is a 745-amino-acid chain: Photosystem I P700 chlorophyll a apoprotein A2 (745 aa).

The next 8 helical transmembrane spans lie at 49-72, 138-161, 178-202, 276-294, 338-361, 377-403, 425-447, and 528-546; these read LFAT…FHIA, LYAG…LHLQ, LNHH…HVAI, MAHH…GHMY, LHFQ…QHMY, AALY…IFLV, AIIS…LYVH, and FLVH…LILV. 2 residues coordinate [4Fe-4S] cluster: cysteine 570 and cysteine 579. Transmembrane regions (helical) follow at residues 586–607 and 654–676; these read AFYL…YWHW and LAVW…MFLI. 3 residues coordinate chlorophyll a: histidine 665, methionine 673, and tyrosine 681. Tryptophan 682 lines the phylloquinone pocket. A helical membrane pass occupies residues 718–738; that stretch reads LVGLAHFTVGYVLTYAAFVIA.

The protein belongs to the PsaA/PsaB family. In terms of assembly, the PsaA/B heterodimer binds the P700 chlorophyll special pair and subsequent electron acceptors. PSI consists of a core antenna complex that captures photons, and an electron transfer chain that converts photonic excitation into a charge separation. The cyanobacterial PSI reaction center is composed of one copy each of PsaA,B,C,D,E,F,I,J,K,L,M and X, and forms trimeric complexes. PSI electron transfer chain: 5 chlorophyll a, 1 chlorophyll a', 2 phylloquinones and 3 4Fe-4S clusters. PSI core antenna: 90 chlorophyll a, 22 carotenoids, 3 phospholipids and 1 galactolipid. P700 is a chlorophyll a/chlorophyll a' dimer, A0 is one or more chlorophyll a, A1 is one or both phylloquinones and FX is a shared 4Fe-4S iron-sulfur center. serves as cofactor.

It localises to the cellular thylakoid membrane. The catalysed reaction is reduced [plastocyanin] + hnu + oxidized [2Fe-2S]-[ferredoxin] = oxidized [plastocyanin] + reduced [2Fe-2S]-[ferredoxin]. Its function is as follows. PsaA and PsaB bind P700, the primary electron donor of photosystem I (PSI), as well as the electron acceptors A0, A1 and FX. PSI is a plastocyanin/cytochrome c6-ferredoxin oxidoreductase, converting photonic excitation into a charge separation, which transfers an electron from the donor P700 chlorophyll pair to the spectroscopically characterized acceptors A0, A1, FX, FA and FB in turn. Oxidized P700 is reduced on the lumenal side of the thylakoid membrane by plastocyanin or cytochrome c6. The sequence is that of Photosystem I P700 chlorophyll a apoprotein A2 from Synechococcus sp. (strain JA-3-3Ab) (Cyanobacteria bacterium Yellowstone A-Prime).